Consider the following 1300-residue polypeptide: Sal-like protein 3 (1300 aa).

Positions 1 to 11 are enriched in basic residues; the sequence is MSRRKQAKPQH. Disordered stretches follow at residues 1–51, 84–162, 234–258, and 277–352; these read MSRR…EETS, EDAP…YGAP, QRPP…PSQL, and GSGP…GSLL. A C2H2-type 1; atypical zinc finger spans residues 51 to 73; sequence SVCEKCCAEFFKWADFLEHQRSC. A compositionally biased stretch (pro residues) spans 87–100; that stretch reads PAPPPEDFPEPSPA. Phosphoserine is present on S109. A compositionally biased stretch (basic and acidic residues) spans 122–132; sequence GEARPVEKEAE. Residues 145–157 are compositionally biased toward pro residues; sequence PRPPPAAPAPPTP. Low complexity-rich tracts occupy residues 277–319 and 329–352; these read GSGP…AAPA and PQSA…GSLL. 2 consecutive C2H2-type zinc fingers follow at residues 420-442 and 448-470; these read HKCR…LRSH and FKCN…FQRH. The interval 523–633 is disordered; it reads PTSVGLQLPP…VDGAPTSLGS (111 aa). The segment covering 543–561 has biased composition (low complexity); it reads SPSATPASRSPQRPSPASS. A compositionally biased stretch (polar residues) spans 577 to 586; sequence VSATAESPQS. 3 consecutive C2H2-type zinc fingers follow at residues 679–701, 707–729, and 739–761; these read NQCV…YRTH, FKCK…FGVH, and HSCP…IRMH. A disordered region spans residues 864-955; sequence SVENGSGESD…GSGGAPGRAG (92 aa). Positions 889 to 910 are enriched in low complexity; it reads RSAGSPALSESSSSQALSPAPS. The residue at position 919 (S919) is a Phosphoserine. 4 consecutive C2H2-type zinc fingers follow at residues 977–999, 1005–1027, 1113–1135, and 1141–1163; these read TVCG…YRSH, FVCA…LLTH, HNCQ…ERTH, and FGCT…MGTH. S1177 is modified (phosphoserine). The segment at 1259 to 1279 is disordered; that stretch reads GMDKARTGSSPPIVSLDKASS.

This sequence belongs to the sal C2H2-type zinc-finger protein family. Widely expressed in adult with highest levels in heart. Expressed in fetal brain (in neurons of hippocampus, cortex, mediodorsal and ventrolateral thalamic nuclei, putamen, cerebellum and brainstem).

Its subcellular location is the nucleus. Probable transcription factor. This chain is Sal-like protein 3 (SALL3), found in Homo sapiens (Human).